A 105-amino-acid chain; its full sequence is Small ribosomal subunit protein uS10 (105 aa).

Belongs to the universal ribosomal protein uS10 family. In terms of assembly, part of the 30S ribosomal subunit.

Its function is as follows. Involved in the binding of tRNA to the ribosomes. This is Small ribosomal subunit protein uS10 from Anaplasma marginale (strain Florida).